A 104-amino-acid polypeptide reads, in one-letter code: Guanyl-specific ribonuclease Ap1 (104 aa).

2 cysteine pairs are disulfide-bonded: C2-C10 and C6-C103. Residue H40 is part of the active site. Catalysis depends on E58, which acts as the Proton acceptor. Residue H92 is the Proton donor of the active site.

The protein belongs to the ribonuclease N1/T1 family.

The protein localises to the secreted. It carries out the reaction [RNA] containing guanosine + H2O = an [RNA fragment]-3'-guanosine-3'-phosphate + a 5'-hydroxy-ribonucleotide-3'-[RNA fragment].. The polypeptide is Guanyl-specific ribonuclease Ap1 (Aspergillus pallidus).